The sequence spans 118 residues: Protein yippee-like 1 (118 aa).

A Yippee domain is found at 19 to 116 (RTYSCIHCRA…IELAHMIKDN (98 aa)). Zn(2+) contacts are provided by Cys-23, Cys-26, Cys-79, and Cys-82. The Nuclear localization signal motif lies at 99–104 (KYKEGK).

This sequence belongs to the yippee family.

It is found in the nucleus. Functionally, may play a role in epithelioid conversion of fibroblasts. This chain is Protein yippee-like 1 (Ypel1), found in Mus musculus (Mouse).